We begin with the raw amino-acid sequence, 162 residues long: MQPLVGIIMGSTSDWETMKHACDILDELNVPYEKKVVSAHRTPDFMFEYAETARERGIKVIIAGAGGAAHLPGMTAAKTTLPVIGVPVQSKALNGMDSLLSIVQMPGGVPVATTSIGKAGAVNAGLLAAQILSAFDEDLARKLDERRENTKQTVLESSDQLV.

Substrate contacts are provided by serine 11, aspartate 14, and arginine 41.

This sequence belongs to the AIR carboxylase family. Class I subfamily.

It catalyses the reaction 5-carboxyamino-1-(5-phospho-D-ribosyl)imidazole + H(+) = 5-amino-1-(5-phospho-D-ribosyl)imidazole-4-carboxylate. Its pathway is purine metabolism; IMP biosynthesis via de novo pathway; 5-amino-1-(5-phospho-D-ribosyl)imidazole-4-carboxylate from 5-amino-1-(5-phospho-D-ribosyl)imidazole (N5-CAIR route): step 2/2. Catalyzes the conversion of N5-carboxyaminoimidazole ribonucleotide (N5-CAIR) to 4-carboxy-5-aminoimidazole ribonucleotide (CAIR). The sequence is that of N5-carboxyaminoimidazole ribonucleotide mutase from Bacillus subtilis (strain 168).